We begin with the raw amino-acid sequence, 589 residues long: 3-hydroxy-3-methylglutaryl coenzyme A reductase 2-B (589 aa).

The Lumenal portion of the chain corresponds to 1–35 (MDVRRRPVTKTLTAGEPLKSQNQHSSSLKASDALP). The chain crosses the membrane as a helical span at residues 36-56 (LPLYLTNGLFFTMFFSVMYFL). The Cytoplasmic segment spans residues 57 to 79 (LHRWREKIRNSVPLHVVTLSELA). A helical membrane pass occupies residues 80–100 (ALVLLVASVIYLLGFFGIGFV). Over 101-544 (QSLIRPSPDS…SKESPGPNSR (444 aa)) the chain is Lumenal. Asn-256 carries N-linked (GlcNAc...) asparagine glycosylation. Catalysis depends on Glu-268, which acts as the Charge relay system. An N-linked (GlcNAc...) asparagine glycan is attached at Asn-332. Active-site charge relay system residues include Lys-400 and Asp-476. Residues 545–565 (LLASIVAGSVLAGELSLMSAL) traverse the membrane as a helical segment. The Cytoplasmic segment spans residues 566–589 (AAGQLVKSHMKFNRSSKDVSKLSS). His-574 functions as the Proton donor in the catalytic mechanism.

This sequence belongs to the HMG-CoA reductase family.

The protein resides in the endoplasmic reticulum membrane. It carries out the reaction (R)-mevalonate + 2 NADP(+) + CoA = (3S)-3-hydroxy-3-methylglutaryl-CoA + 2 NADPH + 2 H(+). The protein operates within metabolic intermediate biosynthesis; (R)-mevalonate biosynthesis; (R)-mevalonate from acetyl-CoA: step 3/3. Its function is as follows. Catalyzes the synthesis of mevalonate, the specific precursor of all isoprenoid compounds present in plants. Component of the triterpene saponins (e.g. ginsenosides or panaxosides) and phytosterols biosynthetic pathways. Promotes triterpenes accumulation in roots. This Panax ginseng (Korean ginseng) protein is 3-hydroxy-3-methylglutaryl coenzyme A reductase 2-B.